The chain runs to 325 residues: Large ribosomal subunit protein uL4m (325 aa).

The interval 113–158 (ASTKTRYEVHGSHKKMSPQKGTGNARRGTRQSPLMKGGGKTFGPKP) is disordered.

This sequence belongs to the universal ribosomal protein uL4 family. As to quaternary structure, component of the mitochondrial large ribosomal subunit (mt-LSU). Mature N.crassa 74S mitochondrial ribosomes consist of a small (37S) and a large (54S) subunit. The 37S small subunit contains a 16S ribosomal RNA (16S mt-rRNA) and 32 different proteins. The 54S large subunit contains a 23S rRNA (23S mt-rRNA) and 42 different proteins.

Its subcellular location is the mitochondrion. Its function is as follows. Component of the mitochondrial ribosome (mitoribosome), a dedicated translation machinery responsible for the synthesis of mitochondrial genome-encoded proteins, including at least some of the essential transmembrane subunits of the mitochondrial respiratory chain. The mitoribosomes are attached to the mitochondrial inner membrane and translation products are cotranslationally integrated into the membrane. The polypeptide is Large ribosomal subunit protein uL4m (yml6) (Neurospora crassa (strain ATCC 24698 / 74-OR23-1A / CBS 708.71 / DSM 1257 / FGSC 987)).